The sequence spans 491 residues: Hydroxymethylglutaryl-CoA synthase (491 aa).

Glu-127 functions as the Proton donor/acceptor in the catalytic mechanism. Cys-159 functions as the Acyl-thioester intermediate in the catalytic mechanism. Positions 159, 201, and 250 each coordinate (3S)-3-hydroxy-3-methylglutaryl-CoA. Ser-276 is subject to Phosphoserine. The active-site Proton donor/acceptor is His-296. (3S)-3-hydroxy-3-methylglutaryl-CoA contacts are provided by His-296, Lys-305, Asn-371, and Ser-405.

This sequence belongs to the thiolase-like superfamily. HMG-CoA synthase family.

The catalysed reaction is acetoacetyl-CoA + acetyl-CoA + H2O = (3S)-3-hydroxy-3-methylglutaryl-CoA + CoA + H(+). Its pathway is metabolic intermediate biosynthesis; (R)-mevalonate biosynthesis; (R)-mevalonate from acetyl-CoA: step 2/3. Hydroxymethylglutaryl-CoA synthase; part of the first module of ergosterol biosynthesis pathway that includes the early steps of the pathway, conserved across all eukaryotes, and which results in the formation of mevalonate from acetyl-coenzyme A (acetyl-CoA). ERG13 condenses acetyl-CoA with acetoacetyl-CoA to form hydroxymethylglutaryl-CoA (HMG-CoA). The first module starts with the action of the cytosolic acetyl-CoA acetyltransferase ERG10 that catalyzes the formation of acetoacetyl-CoA. The hydroxymethylglutaryl-CoA synthase ERG13 then condenses acetyl-CoA with acetoacetyl-CoA to form HMG-CoA. The rate-limiting step of the early module is the reduction to mevalonate by the 3-hydroxy-3-methylglutaryl-coenzyme A (HMG-CoA) reductases HMG1 and HMG2 which are derived from a single ancestral HMGR gene by gene duplication. In Saccharomyces cerevisiae (strain ATCC 204508 / S288c) (Baker's yeast), this protein is Hydroxymethylglutaryl-CoA synthase.